Here is an 804-residue protein sequence, read N- to C-terminus: Cell surface sensor MSB2 (804 aa).

The N-terminal stretch at 1–20 is a signal peptide; it reads MHNFSKLAVAFVAAASFASA. Topologically, residues 21-694 are extracellular; it reads EPETKAKVER…TNQSATQRGT (674 aa). Asn-45 is a glycosylation site (N-linked (GlcNAc...) asparagine). Composition is skewed to low complexity over residues 46–58 and 69–80; these read TTTPASEASSSTS and SSFSSSASSSSA. 2 disordered regions span residues 46–90 and 105–220; these read TTTP…RQPT and TDST…ATSN. The serine/threonine rich region (STR) stretch occupies residues 46–475; the sequence is TTTPASEASS…SVAPTSATSS (430 aa). Polar residues-rich tracts occupy residues 81–90 and 109–126; these read QELTASRQPT and PFSQRPATSGAGRSSATG. Composition is skewed to low complexity over residues 128–143 and 150–169; these read VTPIIVPSSASPPSTA and SALTTSQNSTSAATSESVTS. Asn-157 carries an N-linked (GlcNAc...) asparagine glycan. The span at 170 to 188 shows a compositional bias: polar residues; it reads PGSTSGPAGTPESSSASDF. The span at 189–202 shows a compositional bias: low complexity; the sequence is TSAVATSRASTATS. Residues Asn-298, Asn-308, Asn-357, and Asn-393 are each glycosylated (N-linked (GlcNAc...) asparagine). Residues 345 to 394 are compositionally biased toward polar residues; that stretch reads VQTLPPVSTPTANGTVTSPPVDSQTTVLPTTTPGLSSDTIVTSPGVTANS. Residues 345–516 are disordered; the sequence is VQTLPPVSTP…APTVLPSDLP (172 aa). Composition is skewed to low complexity over residues 395–407 and 427–476; these read TQVPTTVPTTIPT and NNTV…TSSA. Residues Asn-427 and Asn-433 are each glycosylated (N-linked (GlcNAc...) asparagine). An HKR11-MSB2 homology domain (HMH) region spans residues 482–641; sequence WLPTTIIVQA…NGMLAHNLTM (160 aa). Positions 493–508 are enriched in polar residues; the sequence is LPSTTGSSTNAPSSAP. 5 N-linked (GlcNAc...) asparagine glycosylation sites follow: Asn-629, Asn-638, Asn-669, Asn-683, and Asn-686. The segment at 658–689 is disordered; the sequence is KPAGAGSGTGGNGSNGPNDVFNNDNNSTNQSA. Over residues 660 to 671 the composition is skewed to gly residues; that stretch reads AGAGSGTGGNGS. The span at 672 to 686 shows a compositional bias: low complexity; sequence NGPNDVFNNDNNSTN. The chain crosses the membrane as a helical span at residues 695-715; sequence VAGIAFGAVSLAAAYGAAMFI. Residues 716–804 lie on the Cytoplasmic side of the membrane; the sequence is VARRYKKKRQ…VAQENSLGWN (89 aa). Disordered regions lie at residues 724-748 and 762-804; these read RQAHRRSSSVATPSEMRQSGSPALM and GVMG…LGWN. Positions 731-744 are enriched in polar residues; the sequence is SSVATPSEMRQSGS. The segment covering 774-787 has biased composition (low complexity); that stretch reads GSNGSGRSAGNSAR.

It belongs to the HKR1/MSB2 family.

The protein resides in the cell membrane. It is found in the vacuole membrane. MSB2 and SHO1 have overlapping functions in recognizing various surface signals for MAPK PMK1 activation and appressorium formation. While MSB2 is critical for sensing surface hydrophobicity and cutin monomers, SHO1 may play a more important role in recognizing rice leaf waxes. The sequence is that of Cell surface sensor MSB2 from Pyricularia oryzae (strain 70-15 / ATCC MYA-4617 / FGSC 8958) (Rice blast fungus).